The primary structure comprises 833 residues: Leucine--tRNA ligase (833 aa).

A 'HIGH' region motif is present at residues 41 to 52 (PYPSGAGLHVGH). Residues 610 to 614 (KMSKS) carry the 'KMSKS' region motif. Residue K613 participates in ATP binding.

The protein belongs to the class-I aminoacyl-tRNA synthetase family.

It is found in the cytoplasm. It catalyses the reaction tRNA(Leu) + L-leucine + ATP = L-leucyl-tRNA(Leu) + AMP + diphosphate. This is Leucine--tRNA ligase from Streptococcus pneumoniae (strain ATCC 700669 / Spain 23F-1).